The primary structure comprises 418 residues: Serine hydroxymethyltransferase (418 aa).

(6S)-5,6,7,8-tetrahydrofolate is bound by residues Leu121 and 125–127; that span reads GHL. Lys230 is modified (N6-(pyridoxal phosphate)lysine). 356–358 contributes to the (6S)-5,6,7,8-tetrahydrofolate binding site; sequence SPF.

This sequence belongs to the SHMT family. In terms of assembly, homodimer. The cofactor is pyridoxal 5'-phosphate.

Its subcellular location is the cytoplasm. The catalysed reaction is (6R)-5,10-methylene-5,6,7,8-tetrahydrofolate + glycine + H2O = (6S)-5,6,7,8-tetrahydrofolate + L-serine. It participates in one-carbon metabolism; tetrahydrofolate interconversion. It functions in the pathway amino-acid biosynthesis; glycine biosynthesis; glycine from L-serine: step 1/1. Functionally, catalyzes the reversible interconversion of serine and glycine with tetrahydrofolate (THF) serving as the one-carbon carrier. This reaction serves as the major source of one-carbon groups required for the biosynthesis of purines, thymidylate, methionine, and other important biomolecules. Also exhibits THF-independent aldolase activity toward beta-hydroxyamino acids, producing glycine and aldehydes, via a retro-aldol mechanism. This chain is Serine hydroxymethyltransferase, found in Shewanella sediminis (strain HAW-EB3).